A 322-amino-acid polypeptide reads, in one-letter code: Cytochrome c biogenesis protein CcsA (322 aa).

The next 8 helical transmembrane spans lie at 6–26 (LQLI…FLFF), 45–65 (LIAN…AGYF), 69–89 (NLYE…LFLY), 97–117 (LLDN…HFIL), 144–164 (MISY…LYFL), 230–250 (LITF…VWAN), 265–285 (WALI…IKGW), and 291–311 (AMVA…VNLL).

Belongs to the CcmF/CycK/Ccl1/NrfE/CcsA family. In terms of assembly, may interact with Ccs1.

The protein resides in the plastid. Its subcellular location is the cyanelle thylakoid membrane. Functionally, required during biogenesis of c-type cytochromes (cytochrome c6 and cytochrome f) at the step of heme attachment. The polypeptide is Cytochrome c biogenesis protein CcsA (Cyanophora paradoxa).